Here is a 501-residue protein sequence, read N- to C-terminus: ATP synthase subunit alpha (501 aa).

Position 169 to 176 (169 to 176 (GDRQTGKT)) interacts with ATP.

Belongs to the ATPase alpha/beta chains family. In terms of assembly, F-type ATPases have 2 components, CF(1) - the catalytic core - and CF(0) - the membrane proton channel. CF(1) has five subunits: alpha(3), beta(3), gamma(1), delta(1), epsilon(1). CF(0) has three main subunits: a(1), b(2) and c(9-12). The alpha and beta chains form an alternating ring which encloses part of the gamma chain. CF(1) is attached to CF(0) by a central stalk formed by the gamma and epsilon chains, while a peripheral stalk is formed by the delta and b chains.

The protein resides in the cell membrane. It catalyses the reaction ATP + H2O + 4 H(+)(in) = ADP + phosphate + 5 H(+)(out). Produces ATP from ADP in the presence of a proton gradient across the membrane. The alpha chain is a regulatory subunit. The chain is ATP synthase subunit alpha from Streptococcus pneumoniae serotype 19F (strain G54).